A 939-amino-acid polypeptide reads, in one-letter code: Translation initiation factor IF-2 (939 aa).

Positions 81-94 (EEQSRKAYEKEQQL) are enriched in basic and acidic residues. Disordered stretches follow at residues 81 to 303 (EEQS…KKVE) and 316 to 337 (TISG…KMRR). The segment covering 99–108 (SSAPSPAPAA) has biased composition (low complexity). 2 stretches are compositionally biased toward basic and acidic residues: residues 112 to 127 (EPVK…RHEP) and 148 to 173 (SPKE…EKAA). Residues 178-189 (EAQPEAQSQQEP) show a composition bias toward low complexity. Residues 244–255 (FKENAAELKDEF) are compositionally biased toward basic and acidic residues. Over residues 276–287 (AAGEGESTTGGE) the composition is skewed to low complexity. Positions 292–301 (KKKKGKKKKK) are enriched in basic residues. Low complexity predominate over residues 318–328 (SGMDDSGSSGS). Positions 436 to 606 (TRPPVVTIMG…LTEAEVRELK (171 aa)) constitute a tr-type G domain. Residues 445–452 (GHVDHGKT) are G1. Residue 445-452 (GHVDHGKT) participates in GTP binding. A G2 region spans residues 470-474 (GITQH). The tract at residues 492–495 (DTPG) is G3. GTP is bound by residues 492 to 496 (DTPGH) and 546 to 549 (NKID). Residues 546-549 (NKID) are G4. The G5 stretch occupies residues 582-584 (SAK).

This sequence belongs to the TRAFAC class translation factor GTPase superfamily. Classic translation factor GTPase family. IF-2 subfamily.

It localises to the cytoplasm. One of the essential components for the initiation of protein synthesis. Protects formylmethionyl-tRNA from spontaneous hydrolysis and promotes its binding to the 30S ribosomal subunits. Also involved in the hydrolysis of GTP during the formation of the 70S ribosomal complex. The sequence is that of Translation initiation factor IF-2 from Chlorobaculum parvum (strain DSM 263 / NCIMB 8327) (Chlorobium vibrioforme subsp. thiosulfatophilum).